A 645-amino-acid chain; its full sequence is Phosphomethylpyrimidine synthase (645 aa).

Residues Asn235, Met264, Tyr293, His329, 349 to 351 (SRG), 390 to 393 (DGLR), and Glu429 contribute to the substrate site. Residue His433 participates in Zn(2+) binding. Tyr456 is a binding site for substrate. His497 provides a ligand contact to Zn(2+). Positions 577, 580, and 585 each coordinate [4Fe-4S] cluster.

This sequence belongs to the ThiC family. As to quaternary structure, homodimer. [4Fe-4S] cluster is required as a cofactor.

The enzyme catalyses 5-amino-1-(5-phospho-beta-D-ribosyl)imidazole + S-adenosyl-L-methionine = 4-amino-2-methyl-5-(phosphooxymethyl)pyrimidine + CO + 5'-deoxyadenosine + formate + L-methionine + 3 H(+). The protein operates within cofactor biosynthesis; thiamine diphosphate biosynthesis. Catalyzes the synthesis of the hydroxymethylpyrimidine phosphate (HMP-P) moiety of thiamine from aminoimidazole ribotide (AIR) in a radical S-adenosyl-L-methionine (SAM)-dependent reaction. This is Phosphomethylpyrimidine synthase from Vibrio cholerae serotype O1 (strain ATCC 39541 / Classical Ogawa 395 / O395).